The sequence spans 151 residues: Major curlin subunit (151 aa).

The first 20 residues, 1-20 (MKLLKVAAIAAIVFSGSALA), serve as a signal peptide directing secretion. Residues 71-90 (TQHGGGNGADVGQGSDDSSI) are disordered.

Belongs to the CsgA/CsgB family.

The protein resides in the fimbrium. Functionally, curlin is the structural subunit of the curli fimbriae. Curli are coiled surface structures that assemble preferentially at growth temperatures below 37 degrees Celsius. Curli can bind to fibronectin. The protein is Major curlin subunit (csgA) of Escherichia coli (strain K12).